Reading from the N-terminus, the 526-residue chain is Peptide chain release factor 3 (526 aa).

Residues asparagine 8–glutamine 277 form the tr-type G domain. Residues serine 17–threonine 24, aspartate 85–histidine 89, and asparagine 139–aspartate 142 each bind GTP.

The protein belongs to the TRAFAC class translation factor GTPase superfamily. Classic translation factor GTPase family. PrfC subfamily.

Its subcellular location is the cytoplasm. Functionally, increases the formation of ribosomal termination complexes and stimulates activities of RF-1 and RF-2. It binds guanine nucleotides and has strong preference for UGA stop codons. It may interact directly with the ribosome. The stimulation of RF-1 and RF-2 is significantly reduced by GTP and GDP, but not by GMP. The sequence is that of Peptide chain release factor 3 from Histophilus somni (strain 129Pt) (Haemophilus somnus).